Here is a 352-residue protein sequence, read N- to C-terminus: Biotin synthase (352 aa).

The Radical SAM core domain maps to 44-262 (NRVQVSTLLS…LAVARIMMPK (219 aa)). Residues cysteine 59, cysteine 63, and cysteine 66 each coordinate [4Fe-4S] cluster. [2Fe-2S] cluster-binding residues include cysteine 103, cysteine 134, cysteine 194, and arginine 266.

Belongs to the radical SAM superfamily. Biotin synthase family. Homodimer. [4Fe-4S] cluster is required as a cofactor. [2Fe-2S] cluster serves as cofactor.

It carries out the reaction (4R,5S)-dethiobiotin + (sulfur carrier)-SH + 2 reduced [2Fe-2S]-[ferredoxin] + 2 S-adenosyl-L-methionine = (sulfur carrier)-H + biotin + 2 5'-deoxyadenosine + 2 L-methionine + 2 oxidized [2Fe-2S]-[ferredoxin]. It functions in the pathway cofactor biosynthesis; biotin biosynthesis; biotin from 7,8-diaminononanoate: step 2/2. In terms of biological role, catalyzes the conversion of dethiobiotin (DTB) to biotin by the insertion of a sulfur atom into dethiobiotin via a radical-based mechanism. This chain is Biotin synthase, found in Pseudomonas aeruginosa (strain UCBPP-PA14).